Here is an 850-residue protein sequence, read N- to C-terminus: Receptor-like protein kinase ANXUR1 (850 aa).

An N-terminal signal peptide occupies residues 1–26 (MSGKTRILFFLTCLSFLLVFPTRSNG). Over 27 to 429 (QDLALSCGTS…KKEFKNEKRH (403 aa)) the chain is Extracellular. 5 N-linked (GlcNAc...) asparagine glycosylation sites follow: N114, N132, N292, N302, and N330. The chain crosses the membrane as a helical span at residues 430–450 (AFIIGSAGGVLAVLIGALCFT). Residues 451–850 (AYKKKQGYQG…FSQIVNPKGR (400 aa)) are Cytoplasmic-facing. The 274-residue stretch at 517–790 (FDDSNVIGVG…GDVLWNLEFA (274 aa)) folds into the Protein kinase domain. ATP-binding positions include 523 to 531 (IGVGGFGKV) and K545. The Proton acceptor role is filled by D641. Residues 796-850 (TADGTRHRTPNNGGSSEDLGRGGMAVNVAGRDDVSDLSSEDNTEIFSQIVNPKGR) are disordered. Residues 839–850 (EIFSQIVNPKGR) show a composition bias toward polar residues.

This sequence belongs to the protein kinase superfamily. Ser/Thr protein kinase family. As to expression, expressed in pollen, but not in pistils or seedlings.

It is found in the cell membrane. The catalysed reaction is L-seryl-[protein] + ATP = O-phospho-L-seryl-[protein] + ADP + H(+). It catalyses the reaction L-threonyl-[protein] + ATP = O-phospho-L-threonyl-[protein] + ADP + H(+). Functionally, receptor-like protein kinase that controls pollen tube behavior by directing rupture at proper timing to release the sperm cell. The sequence is that of Receptor-like protein kinase ANXUR1 (ANX1) from Arabidopsis thaliana (Mouse-ear cress).